A 642-amino-acid chain; its full sequence is Threonine--tRNA ligase (642 aa).

A TGS domain is found at 1–61 (MPVVTLPDGS…DSDANLAIIT (61 aa)). Residues 243-534 (DHRKIGKQLD…LTEEYAGFFP (292 aa)) are catalytic. Zn(2+) is bound by residues Cys334, His385, and His511.

Belongs to the class-II aminoacyl-tRNA synthetase family. As to quaternary structure, homodimer. Zn(2+) serves as cofactor.

The protein localises to the cytoplasm. It catalyses the reaction tRNA(Thr) + L-threonine + ATP = L-threonyl-tRNA(Thr) + AMP + diphosphate + H(+). Catalyzes the attachment of threonine to tRNA(Thr) in a two-step reaction: L-threonine is first activated by ATP to form Thr-AMP and then transferred to the acceptor end of tRNA(Thr). Also edits incorrectly charged L-seryl-tRNA(Thr). In Photorhabdus laumondii subsp. laumondii (strain DSM 15139 / CIP 105565 / TT01) (Photorhabdus luminescens subsp. laumondii), this protein is Threonine--tRNA ligase.